The primary structure comprises 518 residues: MVAYHLLTLISLGLGSHCASALQYGYNQLSTHKDSAVVAGAFPAINGTHLQSPAFTSPGTVPRGFSDGTSGPTRDETMEGFMRRLARSNSWMAYHEADFKSEEGRKFPYMYLSASNSSVENPSSRKLRVWLQGGVHGNEPAGDQSMLALLGDLAANQKWAAKLLEKMDILVLPRYNPDGVFYFQRYLATNFDPNRDHIKLARQQTRDIKELFARFSPHIATDMHEFTAGRTFGPKRDIIYAADALFSAAKNLNIDEGIRQLSEELFAKRMGKDIEAAGLRWDPYITLGESSSSKLLLLEAGTDAKIGRNAMGLSQCVVFLCETRGIGIAGQHFERRTLSGLVMAKSILQTAVDNFDEVYNTIERGIRRFTNSRNDIVLSDKSPVMERTFGMLNITDASLFDYPIDFATTTPAEAVLTRSRPRAYLIPPSWPDIVKRLEVFGVKADKLPYSYVGPVEALNVTSVTFDKEYYEGVVTTTVETKLVERNIRLPAGSYLVKTNQKNAALAFVSLEVRTLYPF.

A signal peptide spans 1–21 (MVAYHLLTLISLGLGSHCASA). Asparagine 46 carries N-linked (GlcNAc...) asparagine glycosylation. A disordered region spans residues 53–76 (PAFTSPGTVPRGFSDGTSGPTRDE). The Peptidase M14 domain maps to 71 to 351 (GPTRDETMEG…VMAKSILQTA (281 aa)). The N-linked (GlcNAc...) asparagine glycan is linked to asparagine 116. Histidine 136, glutamate 139, and histidine 224 together coordinate Zn(2+). The Proton donor/acceptor role is filled by glutamate 322. N-linked (GlcNAc...) asparagine glycans are attached at residues asparagine 393 and asparagine 459.

Belongs to the peptidase M14 family. Zn(2+) is required as a cofactor.

It is found in the secreted. Functionally, extracellular metalloprotease that contributes to pathogenicity. The chain is Probable carboxypeptidase 2 (MCPB) from Trichophyton verrucosum (strain HKI 0517).